A 100-amino-acid polypeptide reads, in one-letter code: uncharacterized protein (100 aa).

A helical membrane pass occupies residues 68-88 (VFLFFFTGSSPSFPAALLGLF).

Its subcellular location is the membrane. This is an uncharacterized protein from Saccharomyces cerevisiae (strain ATCC 204508 / S288c) (Baker's yeast).